Consider the following 1393-residue polypeptide: DNA-directed RNA polymerase subunit beta' (1393 aa).

Zn(2+) is bound by residues C72, C74, C87, and C90. Mg(2+) contacts are provided by D463, D465, and D467. 4 residues coordinate Zn(2+): C812, C887, C894, and C897.

This sequence belongs to the RNA polymerase beta' chain family. The RNAP catalytic core consists of 2 alpha, 1 beta, 1 beta' and 1 omega subunit. When a sigma factor is associated with the core the holoenzyme is formed, which can initiate transcription. It depends on Mg(2+) as a cofactor. Zn(2+) serves as cofactor.

The catalysed reaction is RNA(n) + a ribonucleoside 5'-triphosphate = RNA(n+1) + diphosphate. DNA-dependent RNA polymerase catalyzes the transcription of DNA into RNA using the four ribonucleoside triphosphates as substrates. In Chlamydia pneumoniae (Chlamydophila pneumoniae), this protein is DNA-directed RNA polymerase subunit beta'.